We begin with the raw amino-acid sequence, 125 residues long: Interleukin-6 (125 aa).

A disulfide bridge links C16 with C26.

Belongs to the IL-6 superfamily. Component of a hexamer of two molecules each of IL6, IL6R and IL6ST; first binds to IL6R to associate with the signaling subunit IL6ST. Interacts with IL6R (via the N-terminal ectodomain); this interaction may be affected by IL6R-binding with SORL1, hence decreasing IL6 cis signaling. Interacts with SORL1 (via the N-terminal ectodomain); this interaction leads to IL6 internalization and lysosomal degradation. May form a trimeric complex with the soluble SORL1 ectodomain and soluble IL6R receptor; this interaction might stabilize circulating IL6, hence promoting IL6 trans signaling.

Its subcellular location is the secreted. Its function is as follows. Cytokine with a wide variety of biological functions in immunity, tissue regeneration, and metabolism. Binds to IL6R, then the complex associates to the signaling subunit IL6ST/gp130 to trigger the intracellular IL6-signaling pathway. The interaction with the membrane-bound IL6R and IL6ST stimulates 'classic signaling', whereas the binding of IL6 and soluble IL6R to IL6ST stimulates 'trans-signaling'. Alternatively, 'cluster signaling' occurs when membrane-bound IL6:IL6R complexes on transmitter cells activate IL6ST receptors on neighboring receiver cells. IL6 is a potent inducer of the acute phase response. Rapid production of IL6 contributes to host defense during infection and tissue injury, but excessive IL6 synthesis is involved in disease pathology. In the innate immune response, is synthesized by myeloid cells, such as macrophages and dendritic cells, upon recognition of pathogens through toll-like receptors (TLRs) at the site of infection or tissue injury. In the adaptive immune response, is required for the differentiation of B cells into immunoglobulin-secreting cells. Plays a major role in the differentiation of CD4(+) T cell subsets. Essential factor for the development of T follicular helper (Tfh) cells that are required for the induction of germinal-center formation. Required to drive naive CD4(+) T cells to the Th17 lineage. Also required for proliferation of myeloma cells and the survival of plasmablast cells. In terms of biological role, acts as an essential factor in bone homeostasis and on vessels directly or indirectly by induction of VEGF, resulting in increased angiogenesis activity and vascular permeability. Induces, through 'trans-signaling' and synergistically with IL1B and TNF, the production of VEGF. Involved in metabolic controls, is discharged into the bloodstream after muscle contraction increasing lipolysis and improving insulin resistance. 'Trans-signaling' in central nervous system also regulates energy and glucose homeostasis. Mediates, through GLP-1, crosstalk between insulin-sensitive tissues, intestinal L cells and pancreatic islets to adapt to changes in insulin demand. Also acts as a myokine. Plays a protective role during liver injury, being required for maintenance of tissue regeneration. Also has a pivotal role in iron metabolism by regulating HAMP/hepcidin expression upon inflammation or bacterial infection. Through activation of IL6ST-YAP-NOTCH pathway, induces inflammation-induced epithelial regeneration. The polypeptide is Interleukin-6 (IL6) (Neovison vison (American mink)).